A 150-amino-acid chain; its full sequence is Large ribosomal subunit protein uL15 (150 aa).

The tract at residues 1 to 57 is disordered; it reads MSLTLQSLKPQKGARRRKMRKGRGIAAGQGASCGFGMRGQKSRSGRPTRPGFEGGQM. Positions 12 to 23 are enriched in basic residues; that stretch reads KGARRRKMRKGR. Residues 25-37 are compositionally biased toward gly residues; the sequence is IAAGQGASCGFGM.

The protein belongs to the universal ribosomal protein uL15 family. As to quaternary structure, part of the 50S ribosomal subunit.

Binds to the 23S rRNA. This Synechococcus sp. (strain RCC307) protein is Large ribosomal subunit protein uL15.